The sequence spans 226 residues: V-type proton ATPase subunit E 1 (226 aa).

A2 is modified (N-acetylalanine). A Phosphotyrosine modification is found at Y56.

It belongs to the V-ATPase E subunit family. In terms of assembly, V-ATPase is a heteromultimeric enzyme made up of two complexes: the ATP-hydrolytic V1 complex and the proton translocation V0 complex. The V1 complex consists of three catalytic AB heterodimers that form a heterohexamer, three peripheral stalks each consisting of EG heterodimers, one central rotor including subunits D and F, and the regulatory subunits C and H. The proton translocation complex V0 consists of the proton transport subunit a, a ring of proteolipid subunits c9c'', rotary subunit d, subunits e and f, and the accessory subunits ATP6AP1/Ac45 and ATP6AP2/PRR. Interacts with RABL2/RABL2A; binds preferentially to GTP-bound RABL2. Interacts with ALDOC. Interacts with RAB11B. In terms of tissue distribution, kidney; localizes to early distal nephron, encompassing thick ascending limbs and distal convoluted tubules (at protein level). Ubiquitous. High expression in the skin.

Its subcellular location is the apical cell membrane. The protein resides in the cytoplasmic vesicle. It localises to the secretory vesicle. The protein localises to the synaptic vesicle membrane. It is found in the clathrin-coated vesicle membrane. Its function is as follows. Subunit of the V1 complex of vacuolar(H+)-ATPase (V-ATPase), a multisubunit enzyme composed of a peripheral complex (V1) that hydrolyzes ATP and a membrane integral complex (V0) that translocates protons. V-ATPase is responsible for acidifying and maintaining the pH of intracellular compartments and in some cell types, is targeted to the plasma membrane, where it is responsible for acidifying the extracellular environment. This is V-type proton ATPase subunit E 1 (ATP6V1E1) from Homo sapiens (Human).